We begin with the raw amino-acid sequence, 618 residues long: Crinkler effector protein 16 (618 aa).

The first 19 residues, 1-19, serve as a signal peptide directing secretion; it reads MVVVSLQCAIVGQAGSSFD. An LQLFLAK domain region spans residues 18 to 57; the sequence is FDVEIDDGAKVSKLKDAIKAKKPNDFKVVDADKLHLFLAK. Residues 58-139 are DWL domain; it reads QPVEDESGKE…NMELPSSEQI (82 aa). Positions 140-146 match the HVLVXXP motif motif; it reads HVLVVVP. The N-linked (GlcNAc...) asparagine glycan is linked to Asn-534.

Belongs to the Crinkler effector family.

The protein localises to the secreted. It localises to the host nucleus. Its function is as follows. Secreted effector that elicits necrosis in host plants, a characteristic of plant innate immunity. The polypeptide is Crinkler effector protein 16 (Phytophthora infestans (Potato late blight agent)).